The primary structure comprises 481 residues: Halobacterial transducer protein 9 (481 aa).

Residues 10–81 (SPFTVPLLLN…NKVADTPIDA (72 aa)) enclose the PAS domain. The Methyl-accepting transducer domain occupies 208–444 (DVERLEAASQ…EIAAMVDETA (237 aa)).

The protein belongs to the methyl-accepting chemotaxis (MCP) protein family.

It localises to the cytoplasm. Functionally, potentially involved in chemo- or phototactic signal transduction. This Halobacterium salinarum (strain ATCC 700922 / JCM 11081 / NRC-1) (Halobacterium halobium) protein is Halobacterial transducer protein 9 (htr9).